Here is a 190-residue protein sequence, read N- to C-terminus: Lipid A acyltransferase PagP (190 aa).

The first 18 residues, 1-18, serve as a signal peptide directing secretion; the sequence is MKRLISCLTIICALNASA. Active-site residues include H60, D103, and S104.

This sequence belongs to the lipid A palmitoyltransferase family. As to quaternary structure, homodimer.

The protein localises to the cell outer membrane. The catalysed reaction is a lipid A + a 1,2-diacyl-sn-glycero-3-phosphocholine = a hepta-acyl lipid A + a 2-acyl-sn-glycero-3-phosphocholine. It catalyses the reaction a lipid IVA + a 1,2-diacyl-sn-glycero-3-phosphocholine = a lipid IVB + a 2-acyl-sn-glycero-3-phosphocholine. It carries out the reaction a lipid IIA + a 1,2-diacyl-sn-glycero-3-phosphocholine = a lipid IIB + a 2-acyl-sn-glycero-3-phosphocholine. Its function is as follows. Transfers a fatty acid residue from the sn-1 position of a phospholipid to the N-linked hydroxyfatty acid chain on the proximal unit of lipid A or its precursors. The chain is Lipid A acyltransferase PagP from Legionella pneumophila (strain Paris).